Reading from the N-terminus, the 435-residue chain is GTPase Der (435 aa).

EngA-type G domains follow at residues 4–167 (PVVA…PEKD) and 175–350 (IRFS…DNHN). Residues 10 to 17 (GRPNVGKS), 57 to 61 (DTGGI), 119 to 122 (NKAD), 181 to 188 (GRPNVGKS), 228 to 232 (DTAGI), and 293 to 296 (NKWD) each bind GTP. Residues 351–435 (KRVQSATLND…PIHLIERARK (85 aa)) enclose the KH-like domain.

The protein belongs to the TRAFAC class TrmE-Era-EngA-EngB-Septin-like GTPase superfamily. EngA (Der) GTPase family. Associates with the 50S ribosomal subunit.

Its function is as follows. GTPase that plays an essential role in the late steps of ribosome biogenesis. This Levilactobacillus brevis (strain ATCC 367 / BCRC 12310 / CIP 105137 / JCM 1170 / LMG 11437 / NCIMB 947 / NCTC 947) (Lactobacillus brevis) protein is GTPase Der.